Consider the following 329-residue polypeptide: Putative glycosyltransferase CsbB (329 aa).

Helical transmembrane passes span 231-251 (CFYT…ATFV) and 264-284 (FTII…LGII).

The protein belongs to the glycosyltransferase 2 family. GtrB subfamily.

It localises to the cell membrane. This chain is Putative glycosyltransferase CsbB (csbB), found in Bacillus subtilis (strain 168).